A 300-amino-acid chain; its full sequence is Shikimate kinase, chloroplastic (300 aa).

The transit peptide at 1–65 (MEARVSQSLQ…SDRRVQLKVS (65 aa)) directs the protein to the chloroplast. 111–118 (GMMGCGKT) is an ATP binding site. Thr118 lines the Mg(2+) pocket. Substrate-binding residues include Asp136, Arg161, and Gly183. An ATP-binding site is contributed by Arg222.

The protein belongs to the shikimate kinase family. It depends on Mg(2+) as a cofactor.

It is found in the plastid. It localises to the chloroplast. The enzyme catalyses shikimate + ATP = 3-phosphoshikimate + ADP + H(+). It participates in metabolic intermediate biosynthesis; chorismate biosynthesis; chorismate from D-erythrose 4-phosphate and phosphoenolpyruvate: step 5/7. Catalyzes the specific phosphorylation of the 3-hydroxyl group of shikimic acid using ATP as a cosubstrate. The sequence is that of Shikimate kinase, chloroplastic (SK) from Solanum lycopersicum (Tomato).